The primary structure comprises 97 residues: Large ribosomal subunit protein uL23 (97 aa).

It belongs to the universal ribosomal protein uL23 family. Part of the 50S ribosomal subunit. Contacts protein L29, and trigger factor when it is bound to the ribosome.

One of the early assembly proteins it binds 23S rRNA. One of the proteins that surrounds the polypeptide exit tunnel on the outside of the ribosome. Forms the main docking site for trigger factor binding to the ribosome. The polypeptide is Large ribosomal subunit protein uL23 (Rhizobium rhizogenes (strain K84 / ATCC BAA-868) (Agrobacterium radiobacter)).